The primary structure comprises 201 residues: ATP-dependent Clp protease proteolytic subunit (201 aa).

Serine 101 serves as the catalytic Nucleophile. The active site involves histidine 126.

It belongs to the peptidase S14 family. In terms of assembly, fourteen ClpP subunits assemble into 2 heptameric rings which stack back to back to give a disk-like structure with a central cavity, resembling the structure of eukaryotic proteasomes.

The protein localises to the cytoplasm. It catalyses the reaction Hydrolysis of proteins to small peptides in the presence of ATP and magnesium. alpha-casein is the usual test substrate. In the absence of ATP, only oligopeptides shorter than five residues are hydrolyzed (such as succinyl-Leu-Tyr-|-NHMec, and Leu-Tyr-Leu-|-Tyr-Trp, in which cleavage of the -Tyr-|-Leu- and -Tyr-|-Trp bonds also occurs).. In terms of biological role, cleaves peptides in various proteins in a process that requires ATP hydrolysis. Has a chymotrypsin-like activity. Plays a major role in the degradation of misfolded proteins. The polypeptide is ATP-dependent Clp protease proteolytic subunit (Francisella philomiragia subsp. philomiragia (strain ATCC 25017 / CCUG 19701 / FSC 153 / O#319-036)).